A 239-amino-acid chain; its full sequence is Fatty acid metabolism regulator protein (239 aa).

Positions 6-74 constitute an HTH gntR-type domain; sequence QSPAGFAEEY…HGKPTKVNNF (69 aa). Positions 34–53 form a DNA-binding region, H-T-H motif; the sequence is ERELSELIGVTRTTLREVLQ.

In terms of assembly, homodimer.

It is found in the cytoplasm. Its function is as follows. Multifunctional regulator of fatty acid metabolism. The protein is Fatty acid metabolism regulator protein of Yersinia enterocolitica serotype O:8 / biotype 1B (strain NCTC 13174 / 8081).